The following is a 739-amino-acid chain: Eukaryotic translation initiation factor 3 subunit B (739 aa).

An RRM domain is found at 39–125 (AFVVIDGLPV…HTLAVNKLTD (87 aa)). WD repeat units follow at residues 191 to 229 (RDHW…KQKQ), 231 to 288 (PHPF…RSFV), 457 to 498 (SLKD…SFFA), 516 to 559 (IEKK…EKPE), and 574 to 612 (NEHF…HTFS).

This sequence belongs to the eIF-3 subunit B family. In terms of assembly, component of the eukaryotic translation initiation factor 3 (eIF-3) complex.

The protein resides in the cytoplasm. RNA-binding component of the eukaryotic translation initiation factor 3 (eIF-3) complex, which is involved in protein synthesis of a specialized repertoire of mRNAs and, together with other initiation factors, stimulates binding of mRNA and methionyl-tRNAi to the 40S ribosome. The eIF-3 complex specifically targets and initiates translation of a subset of mRNAs involved in cell proliferation. The chain is Eukaryotic translation initiation factor 3 subunit B from Coccidioides immitis (strain RS) (Valley fever fungus).